Reading from the N-terminus, the 216-residue chain is Refilin-A (216 aa).

A disordered region spans residues 1–83 (MVGHLHLQGM…LPNPPASEMR (83 aa)). The span at 12-22 (DSLKEQGREGL) shows a compositional bias: basic and acidic residues. Positions 29–39 (GLPPSPSPSPP) are enriched in pro residues. A compositionally biased stretch (low complexity) spans 57-71 (ASSEPPGPSEARAPP). Residue Arg163 is modified to Asymmetric dimethylarginine.

Belongs to the Refilin family. Interacts with FLNA and FLNB.

The protein resides in the cytoplasm. Its subcellular location is the cytoskeleton. Involved in the regulation of the perinuclear actin network and nuclear shape through interaction with filamins. Plays an essential role in actin cytoskeleton formation in developing cartilaginous cells. The sequence is that of Refilin-A from Homo sapiens (Human).